The following is a 437-amino-acid chain: Argininosuccinate lyase (437 aa).

It belongs to the lyase 1 family. Argininosuccinate lyase subfamily.

Its subcellular location is the cytoplasm. The enzyme catalyses 2-(N(omega)-L-arginino)succinate = fumarate + L-arginine. It functions in the pathway amino-acid biosynthesis; L-arginine biosynthesis; L-arginine from L-ornithine and carbamoyl phosphate: step 3/3. The chain is Argininosuccinate lyase from Clostridium novyi (strain NT).